The following is a 236-amino-acid chain: Rho-related GTP-binding protein RhoV (236 aa).

Positions 1–27 are disordered; that stretch reads MPPRELSEAEPPPLRAPTPPPRRRSAP. The span at 10 to 20 shows a compositional bias: pro residues; the sequence is EPPPLRAPTPP. Residue S25 is modified to Phosphoserine. Residues 38 to 45, 85 to 89, and 143 to 146 each bind GTP; these read GDGAVGKS, DTAGQ, and TQAD. C234 carries the S-palmitoyl cysteine lipid modification.

The protein belongs to the small GTPase superfamily. Rho family. In terms of assembly, interacts with PAK2. Mg(2+) serves as cofactor. Highly expressed in pancreas, placenta, and fetal brain.

The protein resides in the cell membrane. It localises to the endosome membrane. In terms of biological role, plays a role in the control of the actin cytoskeleton via activation of the JNK pathway. This chain is Rho-related GTP-binding protein RhoV, found in Homo sapiens (Human).